Consider the following 206-residue polypeptide: Large ribosomal subunit protein uL4 (206 aa).

Belongs to the universal ribosomal protein uL4 family. In terms of assembly, part of the 50S ribosomal subunit.

In terms of biological role, one of the primary rRNA binding proteins, this protein initially binds near the 5'-end of the 23S rRNA. It is important during the early stages of 50S assembly. It makes multiple contacts with different domains of the 23S rRNA in the assembled 50S subunit and ribosome. Forms part of the polypeptide exit tunnel. The sequence is that of Large ribosomal subunit protein uL4 from Rhodopseudomonas palustris (strain BisA53).